We begin with the raw amino-acid sequence, 395 residues long: Protein-arginine rhamnosyltransferase (395 aa).

Residues 19–22 (NYGD), tyrosine 205, glutamine 272, and 288–292 (RGEDS) contribute to the dTDP-beta-L-rhamnose site. Aspartate 22 functions as the Proton acceptor in the catalytic mechanism. Residue glutamate 290 is part of the active site.

Belongs to the glycosyltransferase 104 family.

It catalyses the reaction dTDP-beta-L-rhamnose + L-arginyl-[protein] = N(omega)-(alpha-L-rhamnosyl)-L-arginyl-[protein] + dTDP + H(+). Protein-arginine rhamnosyltransferase that catalyzes the transfer of a single rhamnose to elongation factor P (EF-P) on 'Lys-32', a modification required for EF-P-dependent rescue of polyproline stalled ribosomes. In Shewanella oneidensis (strain ATCC 700550 / JCM 31522 / CIP 106686 / LMG 19005 / NCIMB 14063 / MR-1), this protein is Protein-arginine rhamnosyltransferase.